A 477-amino-acid chain; its full sequence is Salivary plasminogen activator alpha 2 (477 aa).

An N-terminal signal peptide occupies residues 1 to 36 (MVNTMKTKLLCVLLLCGAVFSLPRQETYRQLARGSR). One can recognise a Fibronectin type-I domain in the interval 40 to 82 (VACRDEKTQMIYQQQESWLRPEVRSKRVEHCRCDRGLAQCHTV). Cystine bridges form between Cys42–Cys72, Cys70–Cys79, Cys87–Cys98, Cys92–Cys109, Cys111–Cys120, Cys128–Cys209, Cys149–Cys191, Cys180–Cys204, Cys214–Cys345, Cys257–Cys273, Cys265–Cys334, Cys359–Cys434, Cys391–Cys407, and Cys424–Cys452. The 39-residue stretch at 83 to 121 (PVKSCSELRCFNGGTCWQAASFSDFVCQCPKGYTGKQCE) folds into the EGF-like domain. One can recognise a Kringle domain in the interval 128–209 (CYKDQGVTYR…ILEFCSVPVC (82 aa)). Asn185 carries an N-linked (GlcNAc...) asparagine glycan. The Peptidase S1 domain occupies 226–476 (STGGLFTDIT…YLGWIRDNMR (251 aa)). Residues His272 and Asp321 each act as charge relay system in the active site. N-linked (GlcNAc...) asparagine glycosylation occurs at Asn398. The Charge relay system role is filled by Ser428.

Belongs to the peptidase S1 family. As to quaternary structure, monomer.

It localises to the secreted. It carries out the reaction Specific cleavage of Arg-|-Val bond in plasminogen to form plasmin.. Activity toward plasminogen is stimulated in the presence of fibrin I. In terms of biological role, probably essential to support the feeding habits of this exclusively haematophagous animal. Probable potent thrombolytic agent. The chain is Salivary plasminogen activator alpha 2 from Desmodus rotundus (Vampire bat).